The primary structure comprises 408 residues: DNA primase DnaG (408 aa).

The Toprim domain maps to 166–241; that stretch reads EEIIIVEGRA…KIDYIARAPP (76 aa). Positions 172, 215, and 217 each coordinate Mg(2+).

This sequence belongs to the archaeal DnaG primase family. As to quaternary structure, forms a ternary complex with MCM helicase and DNA. Component of the archaeal exosome complex. Mg(2+) serves as cofactor.

It catalyses the reaction ssDNA + n NTP = ssDNA/pppN(pN)n-1 hybrid + (n-1) diphosphate.. RNA polymerase that catalyzes the synthesis of short RNA molecules used as primers for DNA polymerase during DNA replication. Also part of the exosome, which is a complex involved in RNA degradation. Acts as a poly(A)-binding protein that enhances the interaction between heteromeric, adenine-rich transcripts and the exosome. The polypeptide is DNA primase DnaG (Desulfurococcus amylolyticus (strain DSM 18924 / JCM 16383 / VKM B-2413 / 1221n) (Desulfurococcus kamchatkensis)).